The primary structure comprises 309 residues: Olfactory receptor 10V1 (309 aa).

Residues 1–25 (MEGINKTAKMQFFFRPFSPDPEVQM) lie on the Extracellular side of the membrane. N-linked (GlcNAc...) asparagine glycosylation is present at Asn5. Residues 26–46 (LIFVVFLMMYLTSLGGNATIA) form a helical membrane-spanning segment. Residues 47-54 (VIVQINHS) lie on the Cytoplasmic side of the membrane. The helical transmembrane segment at 55–75 (LHTPMYFFLANLAVLEIFYTS) threads the bilayer. The Extracellular portion of the chain corresponds to 76–100 (SITPLALANLLSMGKTPVSITGCGT). The cysteines at positions 98 and 190 are disulfide-linked. A helical membrane pass occupies residues 101 to 121 (QMFFFVFLGGADCVLLVVMAY). Over 122 to 140 (DQFIAICHPLRYRLIMSWS) the chain is Cytoplasmic. A helical membrane pass occupies residues 141–161 (LCVELLVGSLVLGFLLSLPLT). Residues 162 to 198 (ILIFHLPFCHNDEIYHFYCDMPAVMRLACADTRVHKT) lie on the Extracellular side of the membrane. Residues 199 to 218 (ALYIISFIVLSIPLSLISIS) traverse the membrane as a helical segment. At 219–238 (YVFIVVAILRIRSAEGRQQA) the chain is on the cytoplasmic side. A helical membrane pass occupies residues 239 to 259 (YSTCSSHILVVLLQYGCTSFI). The Extracellular portion of the chain corresponds to 260–272 (YLSPSSSYSPEMG). The helical transmembrane segment at 273-293 (RVVSVAYTFITPILNPLIYSL) threads the bilayer. The Cytoplasmic segment spans residues 294–309 (RNKELKDALRKALRKF).

Belongs to the G-protein coupled receptor 1 family.

Its subcellular location is the cell membrane. Its function is as follows. Odorant receptor. This chain is Olfactory receptor 10V1 (OR10V1), found in Homo sapiens (Human).